Consider the following 227-residue polypeptide: Cytochrome c oxidase subunit 2 (227 aa).

At 1 to 14 (MAHPVQLSLQDATS) the chain is on the mitochondrial intermembrane side. A helical membrane pass occupies residues 15 to 45 (PVMEELITFHDHAFMAMSLISFLVLYALLST). The Mitochondrial matrix portion of the chain corresponds to 46-59 (LTTKLTNTSITDAQ). Residues 60–87 (EMETIWTILPAIILILIALPSLRILYLT) form a helical membrane-spanning segment. Residues 88–227 (DEVNDPSFTI…IFEMGPVLTL (140 aa)) are Mitochondrial intermembrane-facing. Residues His161, Cys196, Glu198, Cys200, His204, and Met207 each contribute to the Cu cation site. Glu198 lines the Mg(2+) pocket.

This sequence belongs to the cytochrome c oxidase subunit 2 family. In terms of assembly, component of the cytochrome c oxidase (complex IV, CIV), a multisubunit enzyme composed of 14 subunits. The complex is composed of a catalytic core of 3 subunits MT-CO1, MT-CO2 and MT-CO3, encoded in the mitochondrial DNA, and 11 supernumerary subunits COX4I, COX5A, COX5B, COX6A, COX6B, COX6C, COX7A, COX7B, COX7C, COX8 and NDUFA4, which are encoded in the nuclear genome. The complex exists as a monomer or a dimer and forms supercomplexes (SCs) in the inner mitochondrial membrane with NADH-ubiquinone oxidoreductase (complex I, CI) and ubiquinol-cytochrome c oxidoreductase (cytochrome b-c1 complex, complex III, CIII), resulting in different assemblies (supercomplex SCI(1)III(2)IV(1) and megacomplex MCI(2)III(2)IV(2)). Found in a complex with TMEM177, COA6, COX18, COX20, SCO1 and SCO2. Interacts with TMEM177 in a COX20-dependent manner. Interacts with COX20. Interacts with COX16. It depends on Cu cation as a cofactor.

It localises to the mitochondrion inner membrane. It carries out the reaction 4 Fe(II)-[cytochrome c] + O2 + 8 H(+)(in) = 4 Fe(III)-[cytochrome c] + 2 H2O + 4 H(+)(out). Component of the cytochrome c oxidase, the last enzyme in the mitochondrial electron transport chain which drives oxidative phosphorylation. The respiratory chain contains 3 multisubunit complexes succinate dehydrogenase (complex II, CII), ubiquinol-cytochrome c oxidoreductase (cytochrome b-c1 complex, complex III, CIII) and cytochrome c oxidase (complex IV, CIV), that cooperate to transfer electrons derived from NADH and succinate to molecular oxygen, creating an electrochemical gradient over the inner membrane that drives transmembrane transport and the ATP synthase. Cytochrome c oxidase is the component of the respiratory chain that catalyzes the reduction of oxygen to water. Electrons originating from reduced cytochrome c in the intermembrane space (IMS) are transferred via the dinuclear copper A center (CU(A)) of subunit 2 and heme A of subunit 1 to the active site in subunit 1, a binuclear center (BNC) formed by heme A3 and copper B (CU(B)). The BNC reduces molecular oxygen to 2 water molecules using 4 electrons from cytochrome c in the IMS and 4 protons from the mitochondrial matrix. The protein is Cytochrome c oxidase subunit 2 (MT-CO2) of Macaca mulatta (Rhesus macaque).